The following is a 265-amino-acid chain: MASVKKLAGKVAIVTGGASGIGEVTARLFAERGARAVVIADMQPEKGGTVAESIGGRRCSYVHCDITDEQQVRSVVDWTAATYGGVDVMFCNAGTASATAQTVLDLDLAQFDRVMRVNARGTAACVKQAARKMVELGRGGAIICTASATVHHAGPNLTDYIMSKCGVLGLVRSASLQLGVHGIRVNSVSPTALATPLTATIGLRTAADVESFYGQVTSLKGVAITAEHVAEAVAFLASDEAAFVTGHDLAVDGGLQCLPFVAVAK.

A mitochondrion-targeting transit peptide spans 1-30 (MASVKKLAGKVAIVTGGASGIGEVTARLFA). 13–38 (IVTGGASGIGEVTARLFAERGARAVV) contacts NAD(+). Substrate is bound at residue S147. The active-site Proton acceptor is the Y160.

The protein belongs to the short-chain dehydrogenases/reductases (SDR) family. In terms of assembly, homodimer and homotetramer. Peltate glandular trichomes.

It is found in the mitochondrion. It carries out the reaction (1S,6R)-isopiperitenol + NAD(+) = (6R)-isopiperitenone + NADH + H(+). The enzyme catalyses (1S,5R)-carveol + NADP(+) = (R)-carvone + NADPH + H(+). Its function is as follows. Involved in the biosynthesis of menthol and related monoterpenes in leaves. Can use (-)-trans-carveol and, with a lower relative velocity, (-)-trans-isopiperitenol, (+)-neomenthol, (+)-neoisomenthol and (-)-cis-isopiperitenol as substrates, but not (-)-cis-carvenol, (-)-menthol, (+)-isomenthol, 7-hydroxy-limonene, (-)-isopiperitenone or (-)-carvone. The chain is (-)-isopiperitenol/(-)-carveol dehydrogenase, mitochondrial from Mentha piperita (Peppermint).